We begin with the raw amino-acid sequence, 89 residues long: Large ribosomal subunit protein bL31B (89 aa).

It belongs to the bacterial ribosomal protein bL31 family. Type B subfamily. As to quaternary structure, part of the 50S ribosomal subunit.

This Pseudomonas fluorescens (strain ATCC BAA-477 / NRRL B-23932 / Pf-5) protein is Large ribosomal subunit protein bL31B.